Here is a 916-residue protein sequence, read N- to C-terminus: Rab3 GTPase-activating protein catalytic subunit (916 aa).

Residues 530-574 (NSKRKSEGMVGKASSEEEEDEDDDEGEFFDCDDLTAGAGSPTKAV) are disordered. Residues S543 and S544 each carry the phosphoserine modification. Over residues 545-562 (EEEEDEDDDEGEFFDCDD) the composition is skewed to acidic residues.

The protein belongs to the Rab3-GAP catalytic subunit family. In terms of assembly, the Rab3 GTPase-activating complex is a heterodimer composed of Rab3GAP1 and Rab3-GAP.

It localises to the cytoplasm. Functionally, catalytic subunit of the Rab3 GTPase-activating (Rab3GAP) complex composed of Rab3-GAP and Rab3GAP1, which has both GTPase-activating protein (GAP) activity towards Rab3, and guanine nucleotide exchange factor (GEF) activity towards Rab18. As part of the Rab3GAP complex, required for the rapid induction and sustained expression of synaptic homeostasis at the neuromuscular junction (NMJ). Also participates in the regulation of autophagy in tissues such as larval fat cells and adult muscles. The Rab3GAP complex, acts as a GAP for Rab3 by converting active Rab3-GTP to the inactive form Rab3-GDP. At the neuromuscular junction (NMJ), forms a presynaptic signaling mechanism with Rab3 that regulates progression of synaptic homeostasis at a late stage of vesicle release. Within this mechanism Rab3-GTP acts, directly or indirectly, to inhibit the progression of synaptic homeostasis, and Rab3-GAP functions to inactivate this action of Rab3-GTP. The Rab3GAP complex, acts as a GEF for Rab18 by promoting the conversion of inactive Rab18-GDP to the active form Rab18-GTP. Regulates autophagy as part of a Rab3GAP-Rab18 module. Once Rab18 is activated by the GEF Rab3GAP complex, the Rab3GAP-Rab18 module localizes to autophagosomes, and regulates autolysosome formation and maturation together with the Rab18 interacting effector, the PI3K/Vps34 Complex I. This chain is Rab3 GTPase-activating protein catalytic subunit, found in Drosophila melanogaster (Fruit fly).